A 76-amino-acid polypeptide reads, in one-letter code: DNA-directed RNA polymerase subunit omega (76 aa).

The protein belongs to the RNA polymerase subunit omega family. As to quaternary structure, in cyanobacteria the RNAP catalytic core is composed of 2 alpha, 1 beta, 1 beta', 1 gamma and 1 omega subunit. When a sigma factor is associated with the core the holoenzyme is formed, which can initiate transcription.

It carries out the reaction RNA(n) + a ribonucleoside 5'-triphosphate = RNA(n+1) + diphosphate. Its function is as follows. Promotes RNA polymerase assembly. Latches the N- and C-terminal regions of the beta' subunit thereby facilitating its interaction with the beta and alpha subunits. The chain is DNA-directed RNA polymerase subunit omega from Acaryochloris marina (strain MBIC 11017).